The sequence spans 392 residues: MQPIGTALRPHATRVMLLGAGELGKEVAIESQRLGLEVIAVDRYADAPAMQVAHRSHVMDMRDGDSLRALIERERPDYIVPEIEAIATQTLLQLESDGQRVVPCARAVQLTMNREGIRRLAAETLALPTSPYRFADSIEAFRQAVTEIGYPCFAKPVMSSSGKGQSILRNDDDVAPAWQYARQGARGDADSVIVEGEVRFDFEITLLTVQASDGIHFCAPIGHRQQEGDYRESWQPQAMSPAALARAQAIAASVVRALGGYGLFGVELFVRGDEVIFSEVSPRPHDTGLVTLVSQDLSEFALHVRAFLGLPIGVIRQFGPCASAVLLPSLHSDDVTFANLSQALRPATQLRLFGKPHIDGVRRLGVALAWGESTETARQRARDSAASVVIRP.

N(1)-(5-phospho-beta-D-ribosyl)glycinamide contacts are provided by residues 22–23 (EL) and Glu82. ATP-binding positions include Arg114, Lys155, 160–165 (SSGKGQ), 195–198 (EGEV), and Glu203. Residues 119 to 308 (RLAAETLALP…EFALHVRAFL (190 aa)) form the ATP-grasp domain. Mg(2+)-binding residues include Glu267 and Glu279. Residues Asp286, Lys355, and 362-363 (RR) each bind N(1)-(5-phospho-beta-D-ribosyl)glycinamide.

Belongs to the PurK/PurT family. In terms of assembly, homodimer.

The catalysed reaction is N(1)-(5-phospho-beta-D-ribosyl)glycinamide + formate + ATP = N(2)-formyl-N(1)-(5-phospho-beta-D-ribosyl)glycinamide + ADP + phosphate + H(+). Its pathway is purine metabolism; IMP biosynthesis via de novo pathway; N(2)-formyl-N(1)-(5-phospho-D-ribosyl)glycinamide from N(1)-(5-phospho-D-ribosyl)glycinamide (formate route): step 1/1. In terms of biological role, involved in the de novo purine biosynthesis. Catalyzes the transfer of formate to 5-phospho-ribosyl-glycinamide (GAR), producing 5-phospho-ribosyl-N-formylglycinamide (FGAR). Formate is provided by PurU via hydrolysis of 10-formyl-tetrahydrofolate. This chain is Formate-dependent phosphoribosylglycinamide formyltransferase, found in Edwardsiella ictaluri (strain 93-146).